Consider the following 1070-residue polypeptide: Alpha-glucosidase (1070 aa).

The first 35 residues, 1–35, serve as a signal peptide directing secretion; it reads MRSIKAASLTPLLAALFTTLSSTLALPSSVWEHQL. N-linked (GlcNAc...) asparagine glycosylation is found at N48, N99, N144, N161, N208, N384, N458, N480, and N513. The Nucleophile role is filled by D526. E529 is a catalytic residue. Residues N544, N566, N574, N578, and N635 are each glycosylated (N-linked (GlcNAc...) asparagine). Residue D730 is the Proton donor of the active site. N818, N885, N916, N983, N992, N996, N1008, N1029, N1043, and N1052 each carry an N-linked (GlcNAc...) asparagine glycan.

It belongs to the glycosyl hydrolase 31 family.

The catalysed reaction is Hydrolysis of terminal, non-reducing (1-&gt;4)-linked alpha-D-glucose residues with release of alpha-D-glucose.. Functionally, hydrolyzes a broad range of alpha-D-linked glucopyranosides, including maltose (alpha-1,4), sucrose (alpha-1,2), isomaltose (alpha-1,6) and turanose (alpha-1,3). The protein is Alpha-glucosidase of Candida tsukubaensis (Yeast).